The following is a 158-amino-acid chain: Small ribosomal subunit protein uS9 (158 aa).

A disordered region spans residues 1–20 (MTEAVETETVEPTTDEATAA). Low complexity predominate over residues 10–20 (VEPTTDEATAA).

The protein belongs to the universal ribosomal protein uS9 family.

This chain is Small ribosomal subunit protein uS9, found in Mycobacterium sp. (strain JLS).